Here is a 38-residue protein sequence, read N- to C-terminus: Cytochrome b6-f complex subunit 5 (38 aa).

The chain crosses the membrane as a helical span at residues 5–25; it reads LLLGIVLGLIPVTLAGLFVAA.

It belongs to the PetG family. The 4 large subunits of the cytochrome b6-f complex are cytochrome b6, subunit IV (17 kDa polypeptide, PetD), cytochrome f and the Rieske protein, while the 4 small subunits are PetG, PetL, PetM and PetN. The complex functions as a dimer.

It localises to the cellular thylakoid membrane. In terms of biological role, component of the cytochrome b6-f complex, which mediates electron transfer between photosystem II (PSII) and photosystem I (PSI), cyclic electron flow around PSI, and state transitions. PetG is required for either the stability or assembly of the cytochrome b6-f complex. The chain is Cytochrome b6-f complex subunit 5 from Synechocystis sp. (strain ATCC 27184 / PCC 6803 / Kazusa).